We begin with the raw amino-acid sequence, 319 residues long: D-galacturonate reductase (319 aa).

Catalysis depends on Y58, which acts as the Proton donor. H121 provides a ligand contact to substrate. Residue 216–275 (SPLGAARTKWGDDRVLGSDIIEEIAQAKGKSTAQISLRWVYEQGVSIVTKSYNKERMRQN) coordinates NADP(+).

This sequence belongs to the aldo/keto reductase family. In terms of tissue distribution, expressed specifically in the receptacle tissue of the fruit.

It carries out the reaction L-galactonate + NADP(+) = aldehydo-D-galacturonate + NADPH + H(+). The protein operates within cofactor biosynthesis; L-ascorbate biosynthesis. Its function is as follows. Involved in ascorbic acid (vitamin C) biosynthesis. This Fragaria ananassa (Strawberry) protein is D-galacturonate reductase (GALUR).